A 310-amino-acid polypeptide reads, in one-letter code: Protoheme IX farnesyltransferase 2 (310 aa).

A run of 9 helical transmembrane segments spans residues 25–45, 49–69, 87–107, 120–139, 145–165, 176–196, 220–240, 242–262, and 277–297; these read PGII…AAKG, LVLM…GCAI, RVTV…LALG, ALAL…VYSL, SVYG…VGYC, AILL…IAIF, LHIV…PLAG, TGIA…AMAL, and QVFG…ALDF.

The protein belongs to the UbiA prenyltransferase family. Protoheme IX farnesyltransferase subfamily.

The protein resides in the cell inner membrane. The catalysed reaction is heme b + (2E,6E)-farnesyl diphosphate + H2O = Fe(II)-heme o + diphosphate. It participates in porphyrin-containing compound metabolism; heme O biosynthesis; heme O from protoheme: step 1/1. In terms of biological role, converts heme B (protoheme IX) to heme O by substitution of the vinyl group on carbon 2 of heme B porphyrin ring with a hydroxyethyl farnesyl side group. The polypeptide is Protoheme IX farnesyltransferase 2 (Shewanella baltica (strain OS185)).